Consider the following 72-residue polypeptide: Protein kish-A (72 aa).

An N-terminal signal peptide occupies residues 1 to 26 (MSAIFNFQSLLTVILLLICTCAYIRS). Residues 27–53 (LTPSLLDKNKTGFLGIFWKCARIGERK) are Extracellular-facing. N35 carries N-linked (GlcNAc...) asparagine glycosylation. A helical membrane pass occupies residues 54 to 71 (SPYVAFCCIVMALTILFS). A topological domain (cytoplasmic) is located at residue E72.

The protein belongs to the KISH family.

Its subcellular location is the golgi apparatus membrane. Involved in the early part of the secretory pathway. The polypeptide is Protein kish-A (tmem167a) (Danio rerio (Zebrafish)).